The following is a 218-amino-acid chain: dTTP/UTP pyrophosphatase (218 aa).

The Proton acceptor role is filled by D69.

Belongs to the Maf family. YhdE subfamily. It depends on a divalent metal cation as a cofactor.

Its subcellular location is the cytoplasm. The enzyme catalyses dTTP + H2O = dTMP + diphosphate + H(+). It catalyses the reaction UTP + H2O = UMP + diphosphate + H(+). In terms of biological role, nucleoside triphosphate pyrophosphatase that hydrolyzes dTTP and UTP. May have a dual role in cell division arrest and in preventing the incorporation of modified nucleotides into cellular nucleic acids. The polypeptide is dTTP/UTP pyrophosphatase (Thermomicrobium roseum (strain ATCC 27502 / DSM 5159 / P-2)).